Here is a 958-residue protein sequence, read N- to C-terminus: Nuclear factor NF-kappa-B p100 subunit (958 aa).

The RHD domain occupies 40 to 230 (LLMSYLSIIE…DPIHDSKSPG (191 aa)). The short motif at 343 to 347 (RKRRK) is the Nuclear localization signal element. 2 disordered regions span residues 350–374 (PTFN…SFGQ) and 411–442 (CSAT…QTDS). Positions 352-390 (FNNHFYGGGSPMGGAPPGSSFGQGGGSNINYQYTGMNSA) are GRR. The segment covering 357-374 (YGGGSPMGGAPPGSSFGQ) has biased composition (gly residues). Positions 412-425 (SATNSSEKNQQPSI) are enriched in polar residues. ANK repeat units follow at residues 500–529 (NGDT…SIPN), 539–568 (LQQT…DPTI), 572–603 (YGNS…QKNL), 610–639 (HGLS…NVNS), 644–674 (SGKS…DINA), and 678–707 (GGNT…NVLS). The tract at residues 705 to 766 (VLSENDEPVN…SAEEMHRREQ (62 aa)) is disordered. Residues 724-734 (SESDSDVQMDT) show a composition bias toward acidic residues. Residues 753–766 (ECEHSAEEMHRREQ) are compositionally biased toward basic and acidic residues. The region spanning 815–901 (VNVLALETNT…EGVELLCKSE (87 aa)) is the Death domain. Positions 904 to 916 (AKHHSPAESKNDS) are enriched in basic and acidic residues. Positions 904 to 958 (AKHHSPAESKNDSAYESQSMEVDQSSGNLMDDSQKQTIPVSAAELCPTTEPTIGQ) are disordered. The segment covering 917-931 (AYESQSMEVDQSSGN) has biased composition (polar residues).

As to quaternary structure, active NF-kappa-B is a heterodimer of an about 52 kDa DNA-binding subunit and the weak DNA-binding subunit p65. Two heterodimers might form a labile tetramer. Post-translationally, while translation occurs, the particular unfolded structure after the GRR repeat promotes the generation of p52 making it an acceptable substrate for the proteasome. This process is known as cotranslational processing. The processed form is active and the unprocessed form acts as an inhibitor (I kappa B-like), being able to form cytosolic complexes with NF-kappa B, trapping it in the cytoplasm. Complete folding of the region downstream of the GRR repeat precludes processing. In terms of processing, constitutive processing is tightly suppressed by its C-terminal processing inhibitory domain, named PID, which contains the death domain. In terms of tissue distribution, expressed in spleen.

Its subcellular location is the nucleus. It localises to the cytoplasm. Its function is as follows. Appears to have dual functions such as cytoplasmic retention of attached NF-kappa-B proteins and generation of p52 by a cotranslational processing. The proteasome-mediated process ensures the production of both p52 and p100 and preserves their independent function. p52 binds to the kappa-B consensus sequence 5'-GGRNNYYCC-3', located in the enhancer region of genes involved in immune response and acute phase reactions. In concert with RELB, may play a role in the regulation of the circadian clock. The chain is Nuclear factor NF-kappa-B p100 subunit (nfkb2) from Xenopus laevis (African clawed frog).